Here is a 776-residue protein sequence, read N- to C-terminus: Heat shock protein 110 (776 aa).

Residues 741–776 (ILNKKKPAAPAPPKKEEPQPAAGDQPQSQPGEMDVD) form a disordered region.

It belongs to the heat shock protein 70 family.

This is Heat shock protein 110 from Caenorhabditis elegans.